The sequence spans 908 residues: Protein translocase subunit SecA (908 aa).

ATP contacts are provided by residues Gln87, 105–109, and Asp507; that span reads GEGKT. The disordered stretch occupies residues 860–898; the sequence is EALGNAEESDEASDQSVKTFERAGAKVGRNDPCPCGSGK. 4 residues coordinate Zn(2+): Cys892, Cys894, Cys903, and His904.

It belongs to the SecA family. In terms of assembly, monomer and homodimer. Part of the essential Sec protein translocation apparatus which comprises SecA, SecYEG and auxiliary proteins SecDF-YajC and YidC. Zn(2+) is required as a cofactor.

The protein localises to the cell inner membrane. It is found in the cytoplasm. It carries out the reaction ATP + H2O + cellular proteinSide 1 = ADP + phosphate + cellular proteinSide 2.. Functionally, part of the Sec protein translocase complex. Interacts with the SecYEG preprotein conducting channel. Has a central role in coupling the hydrolysis of ATP to the transfer of proteins into and across the cell membrane, serving both as a receptor for the preprotein-SecB complex and as an ATP-driven molecular motor driving the stepwise translocation of polypeptide chains across the membrane. This is Protein translocase subunit SecA from Methylobacillus flagellatus (strain ATCC 51484 / DSM 6875 / VKM B-1610 / KT).